Reading from the N-terminus, the 293-residue chain is 3-methyl-2-oxobutanoate hydroxymethyltransferase (293 aa).

Positions 1–26 (MTQAPVTAGTPYGTIPPASPLPQRRP) are disordered. Mg(2+) is bound by residues aspartate 68 and aspartate 111. Residues 68–69 (DS), aspartate 111, and lysine 140 each bind 3-methyl-2-oxobutanoate. Residue glutamate 142 coordinates Mg(2+). Catalysis depends on glutamate 209, which acts as the Proton acceptor.

This sequence belongs to the PanB family. Homodecamer; pentamer of dimers. The cofactor is Mg(2+).

It is found in the cytoplasm. The enzyme catalyses 3-methyl-2-oxobutanoate + (6R)-5,10-methylene-5,6,7,8-tetrahydrofolate + H2O = 2-dehydropantoate + (6S)-5,6,7,8-tetrahydrofolate. The protein operates within cofactor biosynthesis; (R)-pantothenate biosynthesis; (R)-pantoate from 3-methyl-2-oxobutanoate: step 1/2. In terms of biological role, catalyzes the reversible reaction in which hydroxymethyl group from 5,10-methylenetetrahydrofolate is transferred onto alpha-ketoisovalerate to form ketopantoate. The sequence is that of 3-methyl-2-oxobutanoate hydroxymethyltransferase from Delftia acidovorans (strain DSM 14801 / SPH-1).